The chain runs to 381 residues: Creatine kinase M-type (381 aa).

A Phosphagen kinase N-terminal domain is found at 11-98 (KLNYKPEEEY…FDPIISDRHG (88 aa)). The Phosphagen kinase C-terminal domain occupies 125-367 (YVLSSRVRTG…KLMVEMEKKL (243 aa)). 128-132 (SSRVR) contacts ATP. The residue at position 164 (Ser164) is a Phosphoserine. Thr166 carries the phosphothreonine modification. Ser178 bears the Phosphoserine mark. Residue Thr180 is modified to Phosphothreonine. Position 191 (His191) interacts with ATP. Ser199 bears the Phosphoserine mark. The ATP site is built by Arg236 and Arg292. Phosphothreonine occurs at positions 313 and 322. Residues 320-325 (RGTGGV) and Asp335 each bind ATP. At Ser372 the chain carries Phosphoserine.

The protein belongs to the ATP:guanido phosphotransferase family. As to quaternary structure, dimer of identical or non-identical chains, which can be either B (brain type) or M (muscle type). With MM being the major form in skeletal muscle and myocardium, MB existing in myocardium, and BB existing in many tissues, especially brain.

Its subcellular location is the cytoplasm. The catalysed reaction is creatine + ATP = N-phosphocreatine + ADP + H(+). Its function is as follows. Reversibly catalyzes the transfer of phosphate between ATP and various phosphogens (e.g. creatine phosphate). Creatine kinase isoenzymes play a central role in energy transduction in tissues with large, fluctuating energy demands, such as skeletal muscle, heart, brain and spermatozoa. This Homo sapiens (Human) protein is Creatine kinase M-type (CKM).